Here is a 185-residue protein sequence, read N- to C-terminus: Ribosome-recycling factor (185 aa).

The protein belongs to the RRF family.

It localises to the cytoplasm. Functionally, responsible for the release of ribosomes from messenger RNA at the termination of protein biosynthesis. May increase the efficiency of translation by recycling ribosomes from one round of translation to another. This chain is Ribosome-recycling factor, found in Frankia alni (strain DSM 45986 / CECT 9034 / ACN14a).